The chain runs to 275 residues: MSVGYDRLKTSSLAELRAAIRSGAYRSHTAGLGQGYLQANLAILPEAYALDFMRYCQRNPKPCPLIGVSDTGNPMMFTLGRDIDIRTDVPAYNVYRDGRLDSVSADITEDWRDDLVVFALGCSFTFEHAVMRAGVALWHVDNDRTVPMFRSNIETVPAGPFSGKMVVSMRAVPEDRVAEVAEISRAYPLAHGAPVYWGDPAGLGIADIMSPDWGDPAPLGPGEVPMFWACGVTPQVAIEAARLPLCITHKPGHMLITDVAEDAEVPVVETAQDKR.

It belongs to the D-glutamate cyclase family.

The chain is Putative hydro-lyase SPO1111 from Ruegeria pomeroyi (strain ATCC 700808 / DSM 15171 / DSS-3) (Silicibacter pomeroyi).